We begin with the raw amino-acid sequence, 33 residues long: Brevinin-2DYb (33 aa).

An intrachain disulfide couples Cys-27 to Cys-33.

As to expression, expressed by the skin glands.

It is found in the secreted. Antimicrobial peptide. Active against the Gram-positive bacterium S.aureus (MIC=30 uM) and the Gram-negative bacterium E.coli (MIC=30 uM). The protein is Brevinin-2DYb of Rana dybowskii (Dybovsky's frog).